A 550-amino-acid chain; its full sequence is Probable endochitinase (550 aa).

The first 16 residues, 1–16 (MLHYLATILWLAVAHA), serve as a signal peptide directing secretion. N-linked (GlcNAc...) asparagine; by host glycosylation is found at asparagine 146 and asparagine 172. The GH18 domain occupies 147–547 (KTVAAYFVEW…NAMNERVRVK (401 aa)). Residue glutamate 304 is the Proton donor of the active site. Residue asparagine 344 is glycosylated (N-linked (GlcNAc...) asparagine; by host). The Prevents secretion from ER signature appears at 547-550 (KDEL).

Belongs to the glycosyl hydrolase 18 family. Chitinase class II subfamily.

The protein localises to the host endoplasmic reticulum lumen. The catalysed reaction is Random endo-hydrolysis of N-acetyl-beta-D-glucosaminide (1-&gt;4)-beta-linkages in chitin and chitodextrins.. This is Probable endochitinase from Orgyia pseudotsugata (Douglas-fir tussock moth).